Here is a 251-residue protein sequence, read N- to C-terminus: 2,3-bisphosphoglycerate-dependent phosphoglycerate mutase (251 aa).

Substrate is bound by residues 11–18, 24–25, Arg-63, 90–93, Lys-101, 117–118, and 185–186; these read RHGNSDWN, TG, ERHY, RR, and GN. Catalysis depends on His-12, which acts as the Tele-phosphohistidine intermediate. The active-site Proton donor/acceptor is the Glu-90. Residues 117 to 142 are disordered; sequence RRSFDVPPPPIDDDDEYSQSRDPRYA.

This sequence belongs to the phosphoglycerate mutase family. BPG-dependent PGAM subfamily.

The catalysed reaction is (2R)-2-phosphoglycerate = (2R)-3-phosphoglycerate. The protein operates within carbohydrate degradation; glycolysis; pyruvate from D-glyceraldehyde 3-phosphate: step 3/5. In terms of biological role, catalyzes the interconversion of 2-phosphoglycerate and 3-phosphoglycerate. The sequence is that of 2,3-bisphosphoglycerate-dependent phosphoglycerate mutase from Clavibacter michiganensis subsp. michiganensis (strain NCPPB 382).